The following is a 368-amino-acid chain: Ribosomal RNA large subunit methyltransferase M (368 aa).

Residues Ser-189, 222 to 225, Asp-241, Asp-261, and Asp-278 contribute to the S-adenosyl-L-methionine site; that span reads CPGG. Residue Lys-307 is the Proton acceptor of the active site.

This sequence belongs to the class I-like SAM-binding methyltransferase superfamily. RNA methyltransferase RlmE family. RlmM subfamily. Monomer.

It is found in the cytoplasm. The enzyme catalyses cytidine(2498) in 23S rRNA + S-adenosyl-L-methionine = 2'-O-methylcytidine(2498) in 23S rRNA + S-adenosyl-L-homocysteine + H(+). In terms of biological role, catalyzes the 2'-O-methylation at nucleotide C2498 in 23S rRNA. This Yersinia enterocolitica serotype O:8 / biotype 1B (strain NCTC 13174 / 8081) protein is Ribosomal RNA large subunit methyltransferase M.